The sequence spans 196 residues: Flagellin B2 (196 aa).

The propeptide occupies 1–12 (MFEFITDEDERG).

This sequence belongs to the archaeal flagellin family. Glycosylated.

It localises to the archaeal flagellum. Its function is as follows. Flagellin is the subunit protein which polymerizes to form the filaments of archaeal flagella. The chain is Flagellin B2 (flaB2) from Halobacterium salinarum (strain ATCC 700922 / JCM 11081 / NRC-1) (Halobacterium halobium).